The sequence spans 510 residues: ATP-dependent zinc metalloprotease FtsH 2 (510 aa).

Topologically, residues 1-4 (MKKN) are cytoplasmic. The chain crosses the membrane as a helical span at residues 5 to 25 (LHIIILALSIFINLLFIYIFI). At 26 to 31 (SEVKPN) the chain is on the extracellular side. A helical membrane pass occupies residues 32–52 (LNLNLSFILTAAVIVVTYLLF). Residues 53–510 (KNKFSELMPV…LWEEENTLCV (458 aa)) lie on the Cytoplasmic side of the membrane. Position 124 to 131 (124 to 131 (GPPGTGKT)) interacts with ATP. Zn(2+) is bound at residue His343. Glu344 is an active-site residue. Zn(2+) is bound by residues His347 and Asp418.

The protein in the central section; belongs to the AAA ATPase family. In the C-terminal section; belongs to the peptidase M41 family. In terms of assembly, homohexamer. Zn(2+) serves as cofactor.

It localises to the cell membrane. Functionally, acts as a processive, ATP-dependent zinc metallopeptidase for both cytoplasmic and membrane proteins. Plays a role in the quality control of integral membrane proteins. In Thermoanaerobacter sp. (strain X514), this protein is ATP-dependent zinc metalloprotease FtsH 2.